A 261-amino-acid polypeptide reads, in one-letter code: uncharacterized protein (261 aa).

The protein resides in the plastid. The protein localises to the chloroplast. This is an uncharacterized protein from Mesostigma viride (Green alga).